The sequence spans 342 residues: Delta-aminolevulinic acid dehydratase (342 aa).

Cys133, Cys135, and Cys143 together coordinate Zn(2+). The active-site Schiff-base intermediate with substrate is Lys210. 2 residues coordinate 5-aminolevulinate: Arg220 and Arg232. At Ser254 the chain carries Phosphoserine. Lys263 functions as the Schiff-base intermediate with substrate in the catalytic mechanism. Ser290 and Tyr329 together coordinate 5-aminolevulinate.

It belongs to the ALAD family. In terms of assembly, homooctamer. Zn(2+) is required as a cofactor.

It carries out the reaction 2 5-aminolevulinate = porphobilinogen + 2 H2O + H(+). Its pathway is porphyrin-containing compound metabolism; protoporphyrin-IX biosynthesis; coproporphyrinogen-III from 5-aminolevulinate: step 1/4. Inhibited by divalent lead ions. Functionally, catalyzes an early step in the biosynthesis of tetrapyrroles. Binds two molecules of 5-aminolevulinate per subunit, each at a distinct site, and catalyzes their condensation to form porphobilinogen. The polypeptide is Delta-aminolevulinic acid dehydratase (HEM2) (Saccharomyces cerevisiae (strain ATCC 204508 / S288c) (Baker's yeast)).